The primary structure comprises 80 residues: CDC42 small effector protein 1 (80 aa).

S-palmitoyl cysteine attachment occurs at residues Cys10 and Cys11. A CRIB domain is found at 30-43 (IGEPMNFVHLTHIG). Residues 48–80 (GAGDGLAMTGAVQEQMRSKGNHRDRPWSNSRAL) form a disordered region.

This sequence belongs to the CDC42SE/SPEC family. As to quaternary structure, interacts with CDC42 (in GTP-bound form). Interacts weakly with RAC1 and not at all with RHOA.

It is found in the cytoplasm. The protein resides in the cytoskeleton. Its subcellular location is the cell membrane. In terms of biological role, probably involved in the organization of the actin cytoskeleton by acting downstream of CDC42, inducing actin filament assembly. Alters CDC42-induced cell shape changes. In activated T-cells, may play a role in CDC42-mediated F-actin accumulation at the immunological synapse. May play a role in early contractile events in phagocytosis in macrophages. The chain is CDC42 small effector protein 1 (Cdc42se1) from Mus musculus (Mouse).